The chain runs to 119 residues: MIQPQTYLEVADNSGARKLMCIRVLNRKIGHIGDVIIAVVKEALPNMPIKKSEVVRAVIVRTAHTIQRDNGMSIRFDDNAAVIINKEGNPRGTRVFGPIARELRERDFMKIVSLAPEVL.

This sequence belongs to the universal ribosomal protein uL14 family. As to quaternary structure, part of the 50S ribosomal subunit.

It is found in the plastid. It localises to the chloroplast. Its function is as follows. Binds to 23S rRNA. The sequence is that of Large ribosomal subunit protein uL14c from Ostreococcus tauri.